We begin with the raw amino-acid sequence, 64 residues long: MAKVSSSLLKFAIVLILVLSMSAIISAKCIKNGKGCREDQGPPFCCSGFCYRQVGWARGYCKNR.

A signal peptide spans 1–26; sequence MAKVSSSLLKFAIVLILVLSMSAIIS. Disulfide bonds link Cys-29–Cys-46, Cys-36–Cys-50, and Cys-45–Cys-61.

Belongs to the AMP family.

The protein localises to the secreted. Possesses antifungal and antibacterial activity. The polypeptide is Antimicrobial peptide 1 (Mesembryanthemum crystallinum (Common ice plant)).